A 1551-amino-acid chain; its full sequence is Dual oxidase 1 (1551 aa).

An N-terminal signal peptide occupies residues Met1–Ala21. Residues Gln22–Gly596 lie on the Extracellular side of the membrane. The segment at Ser26 to Phe593 is peroxidase-like; mediates peroxidase activity. Asn94, Asn342, Asn354, Asn461, and Asn534 each carry an N-linked (GlcNAc...) asparagine glycan. Residues Leu597 to Ala617 form a helical membrane-spanning segment. The Cytoplasmic segment spans residues Arg618–His1044. 3 consecutive EF-hand domains span residues Pro815–Gly850, Ser851–Ile886, and Gln895–Asp930. Positions 828, 830, 832, 834, 839, 864, 866, 868, and 875 each coordinate Ca(2+). The tract at residues Tyr956–Arg1248 is interaction with TXNDC11. A helical membrane pass occupies residues Ile1045 to Tyr1065. Over Tyr1066 to Arg1080 the chain is Extracellular. The helical transmembrane segment at Val1081–Leu1101 threads the bilayer. In terms of domain architecture, Ferric oxidoreductase spans Arg1087–Ser1269. Residues Leu1102–Thr1136 lie on the Cytoplasmic side of the membrane. Residues Ala1137–Ile1157 form a helical membrane-spanning segment. At Ser1158–Gln1188 the chain is on the extracellular side. A helical membrane pass occupies residues Thr1189 to Ala1209. Topologically, residues Ser1210–His1226 are cytoplasmic. A helical transmembrane segment spans residues Leu1227–Pro1247. Arg1248 is a topological domain (extracellular). Residues Phe1249 to Ser1269 form a helical membrane-spanning segment. In terms of domain architecture, FAD-binding FR-type spans Arg1270–Glu1376. At Arg1270–Phe1551 the chain is on the cytoplasmic side.

This sequence in the N-terminal section; belongs to the peroxidase family. In terms of assembly, interacts with TXNDC11, TPO and CYBA. Post-translationally, N-glycosylated. Expressed in thyrocytes (at protein level).

The protein resides in the apical cell membrane. The catalysed reaction is NADH + O2 + H(+) = H2O2 + NAD(+). It carries out the reaction NADPH + O2 + H(+) = H2O2 + NADP(+). The protein operates within hormone biosynthesis; thyroid hormone biosynthesis. Its activity is regulated as follows. The NADPH oxidase activity is calcium-dependent. Peroxidase activity is inhibited by aminobenzohydrazide. Generates hydrogen peroxide which is required for the activity of thyroid peroxidase/TPO and lactoperoxidase/LPO. Plays a role in thyroid hormones synthesis and lactoperoxidase-mediated antimicrobial defense at the surface of mucosa. May have its own peroxidase activity through its N-terminal peroxidase-like domain. The protein is Dual oxidase 1 (Duox1) of Rattus norvegicus (Rat).